Here is a 1273-residue protein sequence, read N- to C-terminus: Receptor-type tyrosine-protein phosphatase C (1273 aa).

Positions 1-23 (MYLWLKLLAFSLALLGPEVFVTG) are cleaved as a signal peptide. Residues 24-546 (QGTTDDGLDT…KPQSTSYNSK (523 aa)) are Extracellular-facing. A disordered region spans residues 45-192 (LPARTTEFTP…TEIATPQTKP (148 aa)). Composition is skewed to polar residues over residues 50-77 (TEFT…SSTL), 84-111 (QPDS…TLTA), and 141-192 (RNST…QTKP). Residue Asn-62 is glycosylated (N-linked (GlcNAc...) asparagine). N-linked (GlcNAc...) asparagine glycans are attached at residues Asn-142, Asn-153, Asn-164, Asn-178, Asn-200, Asn-245, Asn-250, Asn-271, Asn-282, Asn-327, Asn-333, Asn-371, Asn-374, Asn-471, and Asn-502. Fibronectin type-III domains lie at 361 to 452 (PEML…TKAA) and 453 to 545 (RPGK…SYNS). The helical transmembrane segment at 547 to 567 (ALIIFLVFLIIVTSIALLVVL) threads the bilayer. The Cytoplasmic segment spans residues 568-1273 (YKIYDLRKKR…PMSPALTPSS (706 aa)). 2 Tyrosine-protein phosphatase domains span residues 622 to 881 (FLAE…LVEY) and 913 to 1196 (LEAE…MASI). Tyr-652 carries the phosphotyrosine modification. Substrate is bound by residues Asp-790, 822–828 (CSAGVGR), and Gln-866. Cys-822 (phosphocysteine intermediate) is an active-site residue. A phosphoserine mark is found at Ser-944, Ser-963, Ser-966, Ser-970, Ser-973, Ser-974, and Ser-978. The segment at 960 to 984 (LEMSKESEAESDESSDEDSDSEETS) is disordered. Positions 968-981 (AESDESSDEDSDSE) are enriched in acidic residues. The active-site Phosphocysteine intermediate is Cys-1137. Residues Ser-1209 and Ser-1266 each carry the phosphoserine modification. Residues 1219–1273 (VDGAKQDANCVQPADPLNKAQEDSKEVGASEPASGSEEPEHSANGPMSPALTPSS) are disordered.

This sequence belongs to the protein-tyrosine phosphatase family. Receptor class 1/6 subfamily. In terms of assembly, interacts with SKAP1. Interacts with DPP4; the interaction is enhanced in an interleukin-12-dependent manner in activated lymphocytes. Binds GANAB and PRKCSH. Interacts with CD53; this interaction stabilizes PTPRC on the membrane and is required for optimal phosphatase activity. Interacts with CLEC10A. In terms of processing, heavily N- and O-glycosylated. The cytoplasmic domain contains potential phosphorylation sites. In terms of tissue distribution, isoform 1 and isoform 2 are found in thymocyte and lymph node. Isoform 4 and isoform 3 are found in the lymph nod.

The protein resides in the cell membrane. Its subcellular location is the membrane raft. It localises to the synapse. It carries out the reaction O-phospho-L-tyrosyl-[protein] + H2O = L-tyrosyl-[protein] + phosphate. In terms of biological role, protein tyrosine-protein phosphatase required for T-cell activation through the antigen receptor. Acts as a positive regulator of T-cell coactivation upon binding to DPP4. The first PTPase domain has enzymatic activity, while the second one seems to affect the substrate specificity of the first one. Upon T-cell activation, recruits and dephosphorylates SKAP1 and FYN. Dephosphorylates LYN, and thereby modulates LYN activity. Interacts with CLEC10A at antigen presenting cell-T cell contact; CLEC10A on immature dendritic cells recognizes Tn antigen-carrying PTPRC/CD45 receptor on effector T cells and modulates T cell activation threshold to limit autoreactivity. The sequence is that of Receptor-type tyrosine-protein phosphatase C (Ptprc) from Rattus norvegicus (Rat).